The chain runs to 175 residues: MSSFIRWYNSRLAARPLLTQSVTTAFLFATGDVTAQQLVEKRGAQKHDLVRTGRMALYGGFVFGPVATTWFAFLARRVNVRNNKKAEVLARVACDQLGFAPVMIGVFLSSMATMEGKSVKERIDKTWWPALKANWMVWPAVQVINFSLIPLQYRLFFANIIAIGWNSYLSWVNSQ.

3 consecutive transmembrane segments (helical) span residues 55-75 (MALYGGFVFGPVATTWFAFLA), 92-112 (VACDQLGFAPVMIGVFLSSMA), and 143-163 (VINFSLIPLQYRLFFANIIAI).

Belongs to the peroxisomal membrane protein PXMP2/4 family.

It localises to the mitochondrion inner membrane. Functionally, may be involved in cellular response to stress. Required to maintain mitochondrial DNA (mtDNA) integrity and stability. This chain is Protein SYM1 (SYM1), found in Gibberella zeae (strain ATCC MYA-4620 / CBS 123657 / FGSC 9075 / NRRL 31084 / PH-1) (Wheat head blight fungus).